The sequence spans 233 residues: Large ribosomal subunit protein uL1 (233 aa).

It belongs to the universal ribosomal protein uL1 family. As to quaternary structure, part of the 50S ribosomal subunit.

Binds directly to 23S rRNA. The L1 stalk is quite mobile in the ribosome, and is involved in E site tRNA release. Functionally, protein L1 is also a translational repressor protein, it controls the translation of the L11 operon by binding to its mRNA. In Syntrophotalea carbinolica (strain DSM 2380 / NBRC 103641 / GraBd1) (Pelobacter carbinolicus), this protein is Large ribosomal subunit protein uL1.